The sequence spans 304 residues: Killer cell immunoglobulin-like receptor 2DS2 (304 aa).

Residues 1–21 (MSLMVVSMACVGFFLLQGAWP) form the signal peptide. At 22-245 (HEGVHRKPSL…SKTGNPRHLH (224 aa)) the chain is on the extracellular side. 2 consecutive Ig-like C2-type domains span residues 42–107 (EETV…VTHS) and 142–205 (GESV…FRDS). 2 cysteine pairs are disulfide-bonded: C49–C100 and C149–C198. 3 N-linked (GlcNAc...) asparagine glycosylation sites follow: N84, N178, and N211. The segment at 220–239 (VTGNPSNSWPSPTEPSSKTG) is disordered. Residues 246-265 (VLIGTSVVKIPFTILLFFLL) traverse the membrane as a helical segment. Topologically, residues 266–304 (HRWCSNKKNAAVMDQEPAGNRTVNSEDSDEQDHQEVSYA) are cytoplasmic. Positions 280–304 (QEPAGNRTVNSEDSDEQDHQEVSYA) are disordered.

Belongs to the immunoglobulin superfamily.

It is found in the cell membrane. Its function is as follows. Receptor on natural killer (NK) cells for HLA-C alleles. Does not inhibit the activity of NK cells. This Homo sapiens (Human) protein is Killer cell immunoglobulin-like receptor 2DS2.